The sequence spans 350 residues: Sodium/calcium exchanger MaX1 (350 aa).

A run of 10 helical transmembrane segments spans residues 4-24 (VNFL…DYFV), 39-59 (FVIG…ASSI), 69-89 (IVIG…VGVA), 101-121 (MLKR…VFAF), 125-145 (LSML…FFLF), 202-222 (GGFA…VIGA), 242-264 (VIGT…VSAA), 276-296 (VIGS…LFYP), 302-322 (MSLF…LIFI), and 330-350 (RWEG…LFYI).

This sequence belongs to the Ca(2+):cation antiporter (CaCA) (TC 2.A.19) family.

It localises to the cell membrane. Calcium transport is inhibited by Na(+), K(+), Li(+), Mg(2+) or Mn(2+). Its function is as follows. Catalyzes Na(+)/Ca(2+) exchange. The transport is electrogenic with a likely stoichiometry of 3 or more Na(+) for each Ca(2+). Is K(+)-independent. The sequence is that of Sodium/calcium exchanger MaX1 (maX1) from Methanosarcina acetivorans (strain ATCC 35395 / DSM 2834 / JCM 12185 / C2A).